The chain runs to 240 residues: 1-(5-phosphoribosyl)-5-[(5-phosphoribosylamino)methylideneamino] imidazole-4-carboxamide isomerase (240 aa).

Residue D8 is the Proton acceptor of the active site. The Proton donor role is filled by D129.

It belongs to the HisA/HisF family.

It localises to the cytoplasm. The enzyme catalyses 1-(5-phospho-beta-D-ribosyl)-5-[(5-phospho-beta-D-ribosylamino)methylideneamino]imidazole-4-carboxamide = 5-[(5-phospho-1-deoxy-D-ribulos-1-ylimino)methylamino]-1-(5-phospho-beta-D-ribosyl)imidazole-4-carboxamide. It participates in amino-acid biosynthesis; L-histidine biosynthesis; L-histidine from 5-phospho-alpha-D-ribose 1-diphosphate: step 4/9. The sequence is that of 1-(5-phosphoribosyl)-5-[(5-phosphoribosylamino)methylideneamino] imidazole-4-carboxamide isomerase from Clostridium beijerinckii (strain ATCC 51743 / NCIMB 8052) (Clostridium acetobutylicum).